A 114-amino-acid polypeptide reads, in one-letter code: Hydrogenase maturation factor HypA (114 aa).

Residue His-2 coordinates Ni(2+). Residues Cys-73, Cys-76, Cys-90, and Cys-93 each contribute to the Zn(2+) site.

This sequence belongs to the HypA/HybF family.

Its function is as follows. Involved in the maturation of [NiFe] hydrogenases. Required for nickel insertion into the metal center of the hydrogenase. This Chloroflexus aurantiacus (strain ATCC 29366 / DSM 635 / J-10-fl) protein is Hydrogenase maturation factor HypA.